The chain runs to 454 residues: Flavonoid 3-O-glucosyltransferase (454 aa).

A UDP-binding site is contributed by threonine 25. The active-site Proton acceptor is the histidine 26. Arginine 89 contributes to the myricetin binding site. The active-site Charge relay is the aspartate 124. The myricetin site is built by histidine 155, glutamate 192, and phenylalanine 202. Residues serine 282, serine 308, tryptophan 334, and alanine 335 each contribute to the UDP site. UDP-alpha-D-glucose is bound by residues alanine 335, glutamine 337, histidine 352, tryptophan 355, asparagine 356, serine 357, and glutamate 360. Histidine 352 contacts UDP. 3 residues coordinate UDP: asparagine 356, serine 357, and glutamate 360. Glycine 375 lines the myricetin pocket. Residues aspartate 376 and glutamine 377 each contribute to the UDP-alpha-D-glucose site.

It belongs to the UDP-glycosyltransferase family. As to expression, highly expressed in flower buds, flowers and pods. Lower expression in leaves, petioles and stems.

It participates in secondary metabolite biosynthesis; flavonoid biosynthesis. In terms of biological role, catalyzes the glycosylation of flavonoids at the 3-O-position. Glycosylates the 7-O-position if the 3-O-position is not available. Also able to perform 3-O-glycosylation of anthocyanidins. This is Flavonoid 3-O-glucosyltransferase (UGT78G1) from Medicago truncatula (Barrel medic).